Consider the following 426-residue polypeptide: Serine--tRNA ligase (426 aa).

An L-serine-binding site is contributed by 231-233 (TAE). 262–264 (RSE) is a binding site for ATP. Glu285 is an L-serine binding site. Residue 349–352 (EISS) participates in ATP binding. Position 384 (Ser384) interacts with L-serine.

This sequence belongs to the class-II aminoacyl-tRNA synthetase family. Type-1 seryl-tRNA synthetase subfamily. As to quaternary structure, homodimer. The tRNA molecule binds across the dimer.

The protein localises to the cytoplasm. It carries out the reaction tRNA(Ser) + L-serine + ATP = L-seryl-tRNA(Ser) + AMP + diphosphate + H(+). The enzyme catalyses tRNA(Sec) + L-serine + ATP = L-seryl-tRNA(Sec) + AMP + diphosphate + H(+). It functions in the pathway aminoacyl-tRNA biosynthesis; selenocysteinyl-tRNA(Sec) biosynthesis; L-seryl-tRNA(Sec) from L-serine and tRNA(Sec): step 1/1. Its function is as follows. Catalyzes the attachment of serine to tRNA(Ser). Is also able to aminoacylate tRNA(Sec) with serine, to form the misacylated tRNA L-seryl-tRNA(Sec), which will be further converted into selenocysteinyl-tRNA(Sec). This Laribacter hongkongensis (strain HLHK9) protein is Serine--tRNA ligase.